The following is a 60-amino-acid chain: MDPKLLELLVCPVTKGPLTYDRERQELISRSARLAYPVRDGIPVLLENEARPLSDEELEQ.

The protein belongs to the UPF0434 family.

The sequence is that of UPF0434 protein Dtpsy_1553 from Acidovorax ebreus (strain TPSY) (Diaphorobacter sp. (strain TPSY)).